Reading from the N-terminus, the 259-residue chain is Gem-associated protein 2 (259 aa).

It belongs to the gemin-2 family. In terms of assembly, forms a stable heteromeric complex with survival of motor neuron protein (SMN), GEMIN3 and GEMIN4. The SMN complex is associated with the spliceosomal snRNAs U1 and U5 in the cytoplasm of oocytes.

It is found in the nucleus. It localises to the gem. Its subcellular location is the cytoplasm. The SMN complex catalyzes the assembly of small nuclear ribonucleoproteins (snRNPs), the building blocks of the spliceosome, and thereby plays an important role in the splicing of cellular pre-mRNAs. Most spliceosomal snRNPs contain a common set of Sm proteins SNRPB, SNRPD1, SNRPD2, SNRPD3, SNRPE, SNRPF and SNRPG that assemble in a heptameric protein ring on the Sm site of the small nuclear RNA to form the core snRNP (Sm core). In the cytosol, the Sm proteins SNRPD1, SNRPD2, SNRPE, SNRPF and SNRPG (5Sm) are trapped in an inactive 6S pICln-Sm complex by the chaperone CLNS1A that controls the assembly of the core snRNP. To assemble core snRNPs, the SMN complex accepts the trapped 5Sm proteins from CLNS1A. Binding of snRNA inside 5Sm ultimately triggers eviction of the SMN complex, thereby allowing binding of SNRPD3 and SNRPB to complete assembly of the core snRNP. Within the SMN complex, GEMIN2 constrains the conformation of 5Sm, thereby promoting 5Sm binding to snRNA containing the snRNP code (a nonameric Sm site and a 3'-adjacent stem-loop), thus preventing progression of assembly until a cognate substrate is bound. This Xenopus laevis (African clawed frog) protein is Gem-associated protein 2 (gemin2).